A 117-amino-acid polypeptide reads, in one-letter code: Large ribosomal subunit protein bL20c (117 aa).

The protein belongs to the bacterial ribosomal protein bL20 family.

Its subcellular location is the plastid. The protein resides in the chloroplast. Binds directly to 23S ribosomal RNA and is necessary for the in vitro assembly process of the 50S ribosomal subunit. It is not involved in the protein synthesizing functions of that subunit. This is Large ribosomal subunit protein bL20c from Olimarabidopsis pumila (Dwarf rocket).